The chain runs to 390 residues: 4-hydroxy-3-methylbut-2-en-1-yl diphosphate synthase (flavodoxin) (390 aa).

[4Fe-4S] cluster is bound by residues Cys-281, Cys-284, Cys-316, and Glu-323.

This sequence belongs to the IspG family. The cofactor is [4Fe-4S] cluster.

The catalysed reaction is (2E)-4-hydroxy-3-methylbut-2-enyl diphosphate + oxidized [flavodoxin] + H2O + 2 H(+) = 2-C-methyl-D-erythritol 2,4-cyclic diphosphate + reduced [flavodoxin]. The protein operates within isoprenoid biosynthesis; isopentenyl diphosphate biosynthesis via DXP pathway; isopentenyl diphosphate from 1-deoxy-D-xylulose 5-phosphate: step 5/6. In terms of biological role, converts 2C-methyl-D-erythritol 2,4-cyclodiphosphate (ME-2,4cPP) into 1-hydroxy-2-methyl-2-(E)-butenyl 4-diphosphate. The chain is 4-hydroxy-3-methylbut-2-en-1-yl diphosphate synthase (flavodoxin) from Salinispora arenicola (strain CNS-205).